Here is a 307-residue protein sequence, read N- to C-terminus: Elongation factor Ts (307 aa).

Positions 80-83 (TDFV) are involved in Mg(2+) ion dislocation from EF-Tu.

This sequence belongs to the EF-Ts family.

The protein resides in the cytoplasm. Functionally, associates with the EF-Tu.GDP complex and induces the exchange of GDP to GTP. It remains bound to the aminoacyl-tRNA.EF-Tu.GTP complex up to the GTP hydrolysis stage on the ribosome. This Clostridium botulinum (strain Kyoto / Type A2) protein is Elongation factor Ts.